The following is a 65-amino-acid chain: uncharacterized protein (65 aa).

The active-site Nucleophile is the Cys-9. The active site involves Arg-15.

The protein belongs to the low molecular weight phosphotyrosine protein phosphatase family.

This is an uncharacterized protein from Synechococcus sp. (strain WH8020).